The sequence spans 257 residues: Thiazole synthase (257 aa).

Residue K100 is the Schiff-base intermediate with DXP of the active site. 1-deoxy-D-xylulose 5-phosphate is bound by residues G161, 187–188, and 209–210; these read AG and NT.

The protein belongs to the ThiG family. As to quaternary structure, homotetramer. Forms heterodimers with either ThiH or ThiS.

It is found in the cytoplasm. The enzyme catalyses [ThiS sulfur-carrier protein]-C-terminal-Gly-aminoethanethioate + 2-iminoacetate + 1-deoxy-D-xylulose 5-phosphate = [ThiS sulfur-carrier protein]-C-terminal Gly-Gly + 2-[(2R,5Z)-2-carboxy-4-methylthiazol-5(2H)-ylidene]ethyl phosphate + 2 H2O + H(+). It functions in the pathway cofactor biosynthesis; thiamine diphosphate biosynthesis. Catalyzes the rearrangement of 1-deoxy-D-xylulose 5-phosphate (DXP) to produce the thiazole phosphate moiety of thiamine. Sulfur is provided by the thiocarboxylate moiety of the carrier protein ThiS. In vitro, sulfur can be provided by H(2)S. The polypeptide is Thiazole synthase (Pelagibacter ubique (strain HTCC1062)).